The sequence spans 306 residues: Ribosomal RNA small subunit methyltransferase H (306 aa).

S-adenosyl-L-methionine contacts are provided by residues 33–35, D51, F82, D96, and Q103; that span reads GGY.

It belongs to the methyltransferase superfamily. RsmH family.

Its subcellular location is the cytoplasm. The catalysed reaction is cytidine(1402) in 16S rRNA + S-adenosyl-L-methionine = N(4)-methylcytidine(1402) in 16S rRNA + S-adenosyl-L-homocysteine + H(+). Its function is as follows. Specifically methylates the N4 position of cytidine in position 1402 (C1402) of 16S rRNA. This is Ribosomal RNA small subunit methyltransferase H from Rickettsia akari (strain Hartford).